The following is a 313-amino-acid chain: Protoheme IX farnesyltransferase (313 aa).

Helical transmembrane passes span 32–52, 53–73, 120–140, 153–173, 180–200, 226–246, 248–268, and 284–304; these read VMSL…GDFH, PVLA…AGAL, VLVN…YVVI, IVIG…AVTG, LLLF…LALF, ILLY…LGYF, AVYG…AIRV, and LFKF…IEVV.

This sequence belongs to the UbiA prenyltransferase family. Protoheme IX farnesyltransferase subfamily.

The protein resides in the cell inner membrane. It catalyses the reaction heme b + (2E,6E)-farnesyl diphosphate + H2O = Fe(II)-heme o + diphosphate. Its pathway is porphyrin-containing compound metabolism; heme O biosynthesis; heme O from protoheme: step 1/1. Its function is as follows. Converts heme B (protoheme IX) to heme O by substitution of the vinyl group on carbon 2 of heme B porphyrin ring with a hydroxyethyl farnesyl side group. This chain is Protoheme IX farnesyltransferase, found in Rhodopseudomonas palustris (strain BisB5).